We begin with the raw amino-acid sequence, 168 residues long: uncharacterized protein (168 aa).

Residues 24–44 (FIGIVLFLAVLIIGILILILF) traverse the membrane as a helical segment. Disordered regions lie at residues 69 to 92 (SPSS…NNSN) and 142 to 168 (NNNN…TKNI). A compositionally biased stretch (low complexity) spans 142-157 (NNNNNNNNNPPTNISN).

Its subcellular location is the membrane. This is an uncharacterized protein from Dictyostelium discoideum (Social amoeba).